Here is a 2474-residue protein sequence, read N- to C-terminus: Serine/threonine-protein kinase TOR2 (2474 aa).

Positions 1–62 (MNKYINKYTT…NGPNDSGRVI (62 aa)) are disordered. Threonine 10 bears the Phosphothreonine mark. Over residues 25-36 (HRTRKKLTHKSH) the composition is skewed to basic residues. A compositionally biased stretch (polar residues) spans 43–56 (STTSNTDSNHNGPN). HEAT repeat units lie at residues 588–626 (YSLT…KDDI), 636–674 (HSVS…PQLA), 676–710 (PDNL…VNPA), 756–793 (PYID…VGGK), 797–835 (RYLK…SSGY), 841–879 (LDYP…LDPY), 917–955 (YYPT…NLGL), 1039–1076 (RFVP…FGPN), 1079–1116 (DYSH…NINL), 1118–1155 (EMSS…QLGT), and 1292–1331 (SYQE…DDKP). The FAT domain occupies 1338–1922 (TLGKYAQKCH…VYPLMVAIKS (585 aa)). The 325-residue stretch at 2097-2421 (FEPVFSVISS…EHKNAIRNAR (325 aa)) folds into the PI3K/PI4K catalytic domain. Residues 2103–2109 (VISSKQR) are G-loop. The interval 2276-2284 (GLGDRHPSN) is catalytic loop. Residues 2296 to 2321 (HIDFGDCFEAAILREKFPEKVPFRLT) form an activation loop region. The FATC domain maps to 2442–2474 (NDLDVPEQVDKLIQQATSVENLCQHYIGWCPFW).

The protein belongs to the PI3/PI4-kinase family. The target of rapamycin complex 1 (TORC1) is composed of at least KOG1, LST8, TCO89 and either TOR1 (TORC1-A) or TOR2 (TORC1-B). TORC1 binds to and is inhibited by FKBP-rapamycin. Interacts with PIB2; following activation of PIB2 by glutamine. The target of rapamycin complex 2 (TORC2) is composed of at least AVO1, AVO2, BIT61, LST8, TOR2 and TSC11. TORC2 forms a homodimer. Contrary to TORC1, TORC2 does not bind to and is not sensitive to FKBP-rapamycin. Interacts with SLM1 and SLM2.

The protein resides in the cell membrane. Its subcellular location is the vacuole membrane. It catalyses the reaction L-seryl-[protein] + ATP = O-phospho-L-seryl-[protein] + ADP + H(+). It carries out the reaction L-threonyl-[protein] + ATP = O-phospho-L-threonyl-[protein] + ADP + H(+). The enzyme catalyses a 1,2-diacyl-sn-glycero-3-phospho-(1D-myo-inositol) + ATP = a 1,2-diacyl-sn-glycero-3-phospho-(1D-myo-inositol 4-phosphate) + ADP + H(+). Phosphatidylinositol 3-kinase homolog, component of both TORC1 and TORC2. TORC1 regulates multiple cellular processes to control cell growth in response to environmental signals. Nutrient limitation and environmental stress signals cause inactivation of TORC1. Active TORC1 positively controls ribosome biogenesis via control of rRNA, ribosomal protein and tRNA gene expression, and rRNA processing. TORC1 positively controls protein biosynthesis by regulation of mRNA stability, translation initiation factor activity, and high-affinity amino acid permeases that serve to provide amino acids for use by the translation machinery. TORC1 also promotes growth by sequestering a number of nutrient and general stress-responsive transcription factors in the cytoplasm. TORC1 negatively controls macroautophagy, a process to recycle surplus cytoplasmic mass under nutrient starvation conditions. TORC1 controls many of these processes via TIP41-TAP42-mediated inhibition of the type 2A-related phosphatases PP2A and SIT4. In nutrient-rich conditions, responsible for the phosphorylation of AGC S6 kinase (S6K) YPK3, activating YPK3 kinase activity and promoting phosphorylation of ribosomal protein S6. Phosphorylates kinase SCH9 at 6 amino acids in the C-terminus, activating SCH9 kinase activity to properly regulate ribosome biogenesis, translation initiation, and entry into stationary phase. TORC2 regulates cell cycle-dependent polarization of the actin-cytoskeleton, cell wall integrity, and receptor endocytosis. TORC2 controls polarity of the actin cytoskeleton, which is required for orienting the secretory pathway toward discrete growth sites, via the RHO1/PKC1/MAPK cell integrity pathway by activating the RHO1 guanine nucleotide exchange factor ROM2. TORC2 phosphorylates the AGC kinase YPK2, an upstream effector of the cell integrity pathway. TORC2 negatively regulates calcineurin-dependent stress signaling via phosphorylation of its effector SLM1-SLM2. This is Serine/threonine-protein kinase TOR2 (TOR2) from Saccharomyces cerevisiae (strain ATCC 204508 / S288c) (Baker's yeast).